We begin with the raw amino-acid sequence, 133 residues long: Small ribosomal subunit protein uS8 (133 aa).

The protein belongs to the universal ribosomal protein uS8 family. Part of the 30S ribosomal subunit. Contacts proteins S5 and S12.

Its function is as follows. One of the primary rRNA binding proteins, it binds directly to 16S rRNA central domain where it helps coordinate assembly of the platform of the 30S subunit. This Protochlamydia amoebophila (strain UWE25) protein is Small ribosomal subunit protein uS8.